Here is a 689-residue protein sequence, read N- to C-terminus: Elongation factor G (689 aa).

In terms of domain architecture, tr-type G spans 9 to 283 (AKFRNIGIMA…AIVEFMPSPL (275 aa)). GTP is bound by residues 18–25 (AHIDAGKT), 82–86 (DTPGH), and 136–139 (NKMD).

The protein belongs to the TRAFAC class translation factor GTPase superfamily. Classic translation factor GTPase family. EF-G/EF-2 subfamily.

The protein resides in the cytoplasm. Its function is as follows. Catalyzes the GTP-dependent ribosomal translocation step during translation elongation. During this step, the ribosome changes from the pre-translocational (PRE) to the post-translocational (POST) state as the newly formed A-site-bound peptidyl-tRNA and P-site-bound deacylated tRNA move to the P and E sites, respectively. Catalyzes the coordinated movement of the two tRNA molecules, the mRNA and conformational changes in the ribosome. The polypeptide is Elongation factor G (Clostridium botulinum (strain Kyoto / Type A2)).